The following is a 453-amino-acid chain: Homogentisate 1,2-dioxygenase (453 aa).

The Proton acceptor role is filled by histidine 306. Fe cation contacts are provided by histidine 349 and glutamate 355. Homogentisate contacts are provided by tyrosine 364 and histidine 385. Histidine 385 lines the Fe cation pocket.

This sequence belongs to the homogentisate dioxygenase family. Hexamer; dimer of trimers. Fe cation is required as a cofactor.

It carries out the reaction homogentisate + O2 = 4-maleylacetoacetate + H(+). The protein operates within amino-acid degradation; L-phenylalanine degradation; acetoacetate and fumarate from L-phenylalanine: step 4/6. Involved in the catabolism of homogentisate (2,5-dihydroxyphenylacetate or 2,5-OH-PhAc), a central intermediate in the degradation of phenylalanine and tyrosine. Catalyzes the oxidative ring cleavage of the aromatic ring of homogentisate to yield maleylacetoacetate. The sequence is that of Homogentisate 1,2-dioxygenase from Rhizobium johnstonii (strain DSM 114642 / LMG 32736 / 3841) (Rhizobium leguminosarum bv. viciae).